We begin with the raw amino-acid sequence, 146 residues long: MIALLQRVNKASVEVGGETISEIGKGILIFLGIDKKDSKKDVEYLADKVVNLRIFEDNNSKMNLSIKDVGGEIMVVSEFTLAGDCKKGNRPSFDKAMPPEEAEKLYRDFIDSLRSKGIPVKEGVFRSFMHVSLINEGPVTFILNTR.

Residues 137–138 (GP) carry the Gly-cisPro motif, important for rejection of L-amino acids motif.

Belongs to the DTD family. In terms of assembly, homodimer.

It is found in the cytoplasm. It carries out the reaction glycyl-tRNA(Ala) + H2O = tRNA(Ala) + glycine + H(+). The catalysed reaction is a D-aminoacyl-tRNA + H2O = a tRNA + a D-alpha-amino acid + H(+). In terms of biological role, an aminoacyl-tRNA editing enzyme that deacylates mischarged D-aminoacyl-tRNAs. Also deacylates mischarged glycyl-tRNA(Ala), protecting cells against glycine mischarging by AlaRS. Acts via tRNA-based rather than protein-based catalysis; rejects L-amino acids rather than detecting D-amino acids in the active site. By recycling D-aminoacyl-tRNA to D-amino acids and free tRNA molecules, this enzyme counteracts the toxicity associated with the formation of D-aminoacyl-tRNA entities in vivo and helps enforce protein L-homochirality. This is D-aminoacyl-tRNA deacylase from Thermodesulfovibrio yellowstonii (strain ATCC 51303 / DSM 11347 / YP87).